A 635-amino-acid polypeptide reads, in one-letter code: DNA-directed RNA polymerase subunit gamma (635 aa).

Zn(2+) is bound by residues Cys74, Cys76, Cys89, and Cys92. Mg(2+)-binding residues include Asp471, Asp473, and Asp475.

It belongs to the RNA polymerase beta' chain family. RpoC1 subfamily. In cyanobacteria the RNAP catalytic core is composed of 2 alpha, 1 beta, 1 beta', 1 gamma and 1 omega subunit. When a sigma factor is associated with the core the holoenzyme is formed, which can initiate transcription. Requires Mg(2+) as cofactor. Zn(2+) is required as a cofactor.

It catalyses the reaction RNA(n) + a ribonucleoside 5'-triphosphate = RNA(n+1) + diphosphate. Its function is as follows. DNA-dependent RNA polymerase catalyzes the transcription of DNA into RNA using the four ribonucleoside triphosphates as substrates. This is DNA-directed RNA polymerase subunit gamma from Prochlorococcus marinus (strain NATL1A).